The following is a 733-amino-acid chain: Protein PAT1 homolog 2 (733 aa).

Disordered regions lie at residues 42 to 75 (LDQESDEEPVKLEDDHTKPIQMPEAPKEEEPEAL) and 337 to 366 (LHPQHRRILSQRQRPQSSSRRQWESRPDPY). Over residues 49–59 (EPVKLEDDHTK) the composition is skewed to basic and acidic residues. Residues 346–356 (SQRQRPQSSSR) show a composition bias toward low complexity.

This sequence belongs to the PAT1 family. In terms of assembly, interacts with ribonucleoprotein complex components. Interacts with cpeb. As to expression, oocyte-specific protein. Expressed throughout oogenesis but is not detectable in eggs, embryos, nor in adult tissues (at protein level).

The protein resides in the cytoplasm. It localises to the nucleus. In terms of biological role, RNA-binding protein that acts as a translational repressor. When overexpressed, able to disperse P-bodies. The chain is Protein PAT1 homolog 2 (patl2) from Xenopus laevis (African clawed frog).